A 320-amino-acid chain; its full sequence is rRNA 2'-O-methyltransferase fibrillarin 2 (320 aa).

Residues 1 to 79 are disordered; that stretch reads MRPPLTGSGG…GRGGMKGGSK (79 aa). Composition is skewed to gly residues over residues 7–44 and 57–76; these read GSGG…GGRG and PPRG…GMKG. S-adenosyl-L-methionine is bound by residues 167 to 168, 186 to 187, 211 to 212, and 231 to 234; these read TT, EF, DA, and DVAQ.

The protein belongs to the methyltransferase superfamily. Fibrillarin family. In terms of assembly, component of box C/D small nucleolar ribonucleoprotein (snoRNP) particles. Interacts with groundnut rosette virus long-distance movement protein; this interaction is required for virus long-distance movement protein transiting through host Cajal body and nucleolus, relocalization of fibrillarin to the cytoplasm, and in presence of viral RNA, leads to the formation of stable RNPs. Interacts (via GAR domain) with the hordeivirus TGB1 movement protein (via the first 82 amino acid residues). Interacts with PRMT11 and PRMT12. Interacts with MED19A. In terms of processing, methylated by PRMT11 and PRMT12. In terms of tissue distribution, expressed in roots and flowers. Expressed in leaves and stems. Expression levels decrease during aging.

The protein resides in the nucleus. The protein localises to the nucleolus. The catalysed reaction is a ribonucleotide in rRNA + S-adenosyl-L-methionine = a 2'-O-methylribonucleotide in rRNA + S-adenosyl-L-homocysteine + H(+). The enzyme catalyses L-glutaminyl-[histone H2A] + S-adenosyl-L-methionine = N(5)-methyl-L-glutaminyl-[histone H2A] + S-adenosyl-L-homocysteine + H(+). Functionally, S-adenosyl-L-methionine-dependent methyltransferase that has the ability to methylate both RNAs and proteins. Involved in pre-rRNA processing. Utilizes the methyl donor S-adenosyl-L-methionine to catalyze the site-specific 2'-hydroxyl methylation of ribose moieties in pre-ribosomal RNA. Site specificity is provided by a guide RNA that base pairs with the substrate. Methylation occurs at a characteristic distance from the sequence involved in base pairing with the guide RNA. Also acts as a protein methyltransferase by mediating methylation of 'Gln-105' of histone H2A (H2AQ105me), a modification that impairs binding of the FACT complex and is specifically present at 35S ribosomal DNA locus. Acts as a negative regulator of expression of immune responsive genes, including pathogenesis-related gene 1 (PR1), and of resistance against bacterial pathogen. Binds to MED19A, a positive regulator of PR1 expression, to repress the activator activity of MED19A. In response to the bacterial pathogen-associated molecular pattern (PAMP) elf18, associates with the long non-coding RNA (lncRNA) ELENA1 (At4g16355), and releases its repression of MED19A. Possesses ribonuclease activity toward rRNA in vitro. Binds phosphoinositides, phospholipids and phosphatidic acid in vitro. This Arabidopsis thaliana (Mouse-ear cress) protein is rRNA 2'-O-methyltransferase fibrillarin 2.